The chain runs to 1187 residues: Serine/threonine-protein kinase SIK3 homolog (1187 aa).

Low complexity predominate over residues 1–15 (MAAVSSGAAAAAGIP). The tract at residues 1–41 (MAAVSSGAAAAAGIPNPNPNRERPQQQQQQQPASAALHPVA) is disordered. A Protein kinase domain is found at 59-310 (YEMERTIGKG…MEQICKNKWM (252 aa)). Residues 65-73 (IGKGNFAVV) and Lys88 each bind ATP. The Proton acceptor role is filled by Asp181. The residue at position 214 (Thr214) is a Phosphothreonine. Ser218 carries the phosphoserine modification. The region spanning 337–377 (LINEQVLMAMAEMGFDRERTLQSLHADSYDHYSATYSLLSD) is the UBA domain. Disordered regions lie at residues 548–587 (LKRP…VQRS), 697–776 (IQPS…PPGS), and 1060–1092 (CADA…GALQ). Over residues 570 to 581 (VDEEGSDAEPDP) the composition is skewed to acidic residues. Polar residues predominate over residues 739–749 (VQYQHGSALYQ).

The protein belongs to the protein kinase superfamily. CAMK Ser/Thr protein kinase family. SNF1 subfamily. Mg(2+) serves as cofactor.

It catalyses the reaction L-seryl-[protein] + ATP = O-phospho-L-seryl-[protein] + ADP + H(+). The enzyme catalyses L-threonyl-[protein] + ATP = O-phospho-L-threonyl-[protein] + ADP + H(+). This is Serine/threonine-protein kinase SIK3 homolog from Danio rerio (Zebrafish).